The sequence spans 178 residues: ATP-dependent protease subunit HslV (178 aa).

Thr-7 is an active-site residue. Residues Gly-162, Cys-165, and Thr-168 each contribute to the Na(+) site.

The protein belongs to the peptidase T1B family. HslV subfamily. In terms of assembly, a double ring-shaped homohexamer of HslV is capped on each side by a ring-shaped HslU homohexamer. The assembly of the HslU/HslV complex is dependent on binding of ATP.

It localises to the cytoplasm. The catalysed reaction is ATP-dependent cleavage of peptide bonds with broad specificity.. With respect to regulation, allosterically activated by HslU binding. In terms of biological role, protease subunit of a proteasome-like degradation complex believed to be a general protein degrading machinery. This is ATP-dependent protease subunit HslV from Cupriavidus metallidurans (strain ATCC 43123 / DSM 2839 / NBRC 102507 / CH34) (Ralstonia metallidurans).